A 658-amino-acid chain; its full sequence is Translation factor GUF1, mitochondrial (658 aa).

A mitochondrion-targeting transit peptide spans 1 to 40 (MRGCLQTVRWLTSAWQRPRSYSPLSRAAPCRFFNVSIPRN). The tr-type G domain maps to 60-240 (DRFRNFCIVA…TVVEQIPAPV (181 aa)). GTP-binding positions include 69 to 76 (AHVDHGKS), 133 to 137 (DTPGH), and 187 to 190 (NKVD).

The protein belongs to the TRAFAC class translation factor GTPase superfamily. Classic translation factor GTPase family. LepA subfamily.

It is found in the mitochondrion inner membrane. The catalysed reaction is GTP + H2O = GDP + phosphate + H(+). Its function is as follows. Promotes mitochondrial protein synthesis. May act as a fidelity factor of the translation reaction, by catalyzing a one-codon backward translocation of tRNAs on improperly translocated ribosomes. Binds to mitochondrial ribosomes in a GTP-dependent manner. In Paracoccidioides lutzii (strain ATCC MYA-826 / Pb01) (Paracoccidioides brasiliensis), this protein is Translation factor GUF1, mitochondrial.